Consider the following 346-residue polypeptide: Cobalt transport protein CbiM (346 aa).

The first 25 residues, 1–25 (MKRITLYAAGSAIIGAMLLAGPAHA), serve as a signal peptide directing secretion. 8 helical membrane passes run 31–51 (GILP…FLAL), 68–88 (PLVG…IPVP), 101–121 (IAAI…ALLI), 133–153 (TLGA…WFVF), 159–179 (LGAG…WATY), 196–216 (FYPL…PLGV), 255–275 (ATVV…AGPS), and 312–332 (LLLF…GYFW).

Belongs to the CbiM family. Forms an energy-coupling factor (ECF) transporter complex composed of an ATP-binding protein (A component, CbiO), a transmembrane protein (T component, CbiQ) and 2 possible substrate-capture proteins (S components, CbiM and CbiN) of unknown stoichimetry.

It is found in the cell inner membrane. It functions in the pathway cofactor biosynthesis; adenosylcobalamin biosynthesis. Its function is as follows. Part of the energy-coupling factor (ECF) transporter complex CbiMNOQ involved in cobalt import. The sequence is that of Cobalt transport protein CbiM from Geobacter sulfurreducens (strain ATCC 51573 / DSM 12127 / PCA).